Consider the following 135-residue polypeptide: Putative pre-16S rRNA nuclease (135 aa).

The protein belongs to the YqgF nuclease family.

It is found in the cytoplasm. Its function is as follows. Could be a nuclease involved in processing of the 5'-end of pre-16S rRNA. The polypeptide is Putative pre-16S rRNA nuclease (Christiangramia forsetii (strain DSM 17595 / CGMCC 1.15422 / KT0803) (Gramella forsetii)).